The sequence spans 129 residues: Regulator of ribonuclease activity B (129 aa).

The protein belongs to the RraB family. Interacts with the C-terminal region of Rne.

The protein resides in the cytoplasm. Globally modulates RNA abundance by binding to RNase E (Rne) and regulating its endonucleolytic activity. Can modulate Rne action in a substrate-dependent manner by altering the composition of the degradosome. The protein is Regulator of ribonuclease activity B of Shewanella denitrificans (strain OS217 / ATCC BAA-1090 / DSM 15013).